The chain runs to 172 residues: 5'(3')-deoxyribonucleotidase (172 aa).

Residue Asp-8 is the Nucleophile of the active site. Mg(2+)-binding residues include Asp-8, Asp-10, and Asp-132. The active-site Proton donor is Asp-10.

The protein belongs to the 5'(3')-deoxyribonucleotidase family. Mg(2+) serves as cofactor.

Dephosphorylates nucleoside monophosphates such as the 5' and 2'(3')-phosphates of deoxyribonucleotides in vitro. Also catalyzes the dephosphorylation of coenzyme A (CoA), pyridoxal-5'-phosphate (PLP), riboflavine-5-phosphate (FMN) and nicotinamide adenine dinucleotide phosphate (NADP) in vitro. In Bacillus subtilis (strain 168), this protein is 5'(3')-deoxyribonucleotidase (yorS).